A 238-amino-acid chain; its full sequence is Single-stranded DNA-binding protein WHY2, mitochondrial (238 aa).

A mitochondrion-targeting transit peptide spans 1 to 29; sequence MMKQARSLLSRSLCDQSKSLFEASTLRGF. Residues 62–67 are required for ssDNA binding; that stretch reads KGKAAL.

The protein belongs to the Whirly family. Homotetramer.

Its subcellular location is the mitochondrion. Its function is as follows. Single-stranded DNA-binding protein that associates with mitochondrial DNA and may play a role in the regulation of the gene expression machinery. Also seems to be required to prevent break-induced DNA rearrangements in the mitochondrial genome. Can bind to melt double-stranded DNA in vivo. This chain is Single-stranded DNA-binding protein WHY2, mitochondrial (WHY2), found in Arabidopsis thaliana (Mouse-ear cress).